We begin with the raw amino-acid sequence, 426 residues long: Proline--tRNA ligase (426 aa).

The protein belongs to the class-II aminoacyl-tRNA synthetase family. ProS type 2 subfamily. As to quaternary structure, homodimer.

The protein resides in the cytoplasm. It catalyses the reaction tRNA(Pro) + L-proline + ATP = L-prolyl-tRNA(Pro) + AMP + diphosphate. Functionally, catalyzes the attachment of proline to tRNA(Pro) in a two-step reaction: proline is first activated by ATP to form Pro-AMP and then transferred to the acceptor end of tRNA(Pro). In Ehrlichia ruminantium (strain Gardel), this protein is Proline--tRNA ligase.